Consider the following 72-residue polypeptide: MAKDDVIVVDGKVIEALPNAMFRVELDNGHVVLCHISGKMRMHYIKILPNDTVKVEITPYSLDKGRITHRYK.

Positions Met1–Lys72 constitute an S1-like domain.

It belongs to the IF-1 family. As to quaternary structure, component of the 30S ribosomal translation pre-initiation complex which assembles on the 30S ribosome in the order IF-2 and IF-3, IF-1 and N-formylmethionyl-tRNA(fMet); mRNA recruitment can occur at any time during PIC assembly.

The protein resides in the cytoplasm. One of the essential components for the initiation of protein synthesis. Stabilizes the binding of IF-2 and IF-3 on the 30S subunit to which N-formylmethionyl-tRNA(fMet) subsequently binds. Helps modulate mRNA selection, yielding the 30S pre-initiation complex (PIC). Upon addition of the 50S ribosomal subunit IF-1, IF-2 and IF-3 are released leaving the mature 70S translation initiation complex. The protein is Translation initiation factor IF-1 of Aliarcobacter butzleri (strain RM4018) (Arcobacter butzleri).